Consider the following 215-residue polypeptide: Oligoribonuclease (215 aa).

The Exonuclease domain occupies 5–170; the sequence is LVWIDCEMTG…ADIHESIREL (166 aa). Residue tyrosine 127 is part of the active site.

The protein belongs to the oligoribonuclease family.

It is found in the cytoplasm. 3'-to-5' exoribonuclease specific for small oligoribonucleotides. This Mycobacterium ulcerans (strain Agy99) protein is Oligoribonuclease.